The following is a 141-amino-acid chain: Large-conductance mechanosensitive channel (141 aa).

2 helical membrane passes run 16-36 and 83-103; these read VIDLAVGVIIGGAFGKIVDSL and GAFINTTIDFLIIALAIFVAI.

Belongs to the MscL family. Homopentamer.

It localises to the cell inner membrane. In terms of biological role, channel that opens in response to stretch forces in the membrane lipid bilayer. May participate in the regulation of osmotic pressure changes within the cell. The sequence is that of Large-conductance mechanosensitive channel from Azoarcus sp. (strain BH72).